The sequence spans 126 residues: Large ribosomal subunit protein uL22 (126 aa).

It belongs to the universal ribosomal protein uL22 family. In terms of assembly, part of the 50S ribosomal subunit.

Functionally, this protein binds specifically to 23S rRNA; its binding is stimulated by other ribosomal proteins, e.g. L4, L17, and L20. It is important during the early stages of 50S assembly. It makes multiple contacts with different domains of the 23S rRNA in the assembled 50S subunit and ribosome. The globular domain of the protein is located near the polypeptide exit tunnel on the outside of the subunit, while an extended beta-hairpin is found that lines the wall of the exit tunnel in the center of the 70S ribosome. In Dinoroseobacter shibae (strain DSM 16493 / NCIMB 14021 / DFL 12), this protein is Large ribosomal subunit protein uL22.